A 206-amino-acid polypeptide reads, in one-letter code: Translation initiation factor IF-3 (206 aa).

The protein belongs to the IF-3 family. Monomer.

It localises to the cytoplasm. Its function is as follows. IF-3 binds to the 30S ribosomal subunit and shifts the equilibrium between 70S ribosomes and their 50S and 30S subunits in favor of the free subunits, thus enhancing the availability of 30S subunits on which protein synthesis initiation begins. The polypeptide is Translation initiation factor IF-3 (Shigella flexneri).